A 317-amino-acid chain; its full sequence is Beta-ketoacyl-[acyl-carrier-protein] synthase III (317 aa).

Active-site residues include C112 and H244. The ACP-binding stretch occupies residues 245–249 (QANLR). The active site involves N274.

This sequence belongs to the thiolase-like superfamily. FabH family. As to quaternary structure, homodimer.

The protein localises to the cytoplasm. The enzyme catalyses malonyl-[ACP] + acetyl-CoA + H(+) = 3-oxobutanoyl-[ACP] + CO2 + CoA. Its pathway is lipid metabolism; fatty acid biosynthesis. Its function is as follows. Catalyzes the condensation reaction of fatty acid synthesis by the addition to an acyl acceptor of two carbons from malonyl-ACP. Catalyzes the first condensation reaction which initiates fatty acid synthesis and may therefore play a role in governing the total rate of fatty acid production. Possesses both acetoacetyl-ACP synthase and acetyl transacylase activities. Its substrate specificity determines the biosynthesis of branched-chain and/or straight-chain of fatty acids. The polypeptide is Beta-ketoacyl-[acyl-carrier-protein] synthase III (Baumannia cicadellinicola subsp. Homalodisca coagulata).